Reading from the N-terminus, the 87-residue chain is Putative RNase MJ1548 (87 aa).

Catalysis depends on residues Arg-65 and His-70. The RX(4)HXY motif signature appears at 65–72 (RNAIVHKY). Tyr-72 carries the O-di-AMP-tyrosine modification.

It belongs to the HepT RNase toxin family. In terms of assembly, homodimer, probably forms a complex with cognate antitoxin MJ1547. In terms of processing, modified by cognate antitoxin MJ1547; probably at least 2 successive AMPylation events occur on Tyr-72.

Its function is as follows. Probable toxic component of a putative type VII toxin-antitoxin (TA) system, probably an RNase. Probably neutralized by cognate antitoxin MJ1547. Neutralization may be due to AMPylation by antitoxin MJ1547. The sequence is that of Putative RNase MJ1548 from Methanocaldococcus jannaschii (strain ATCC 43067 / DSM 2661 / JAL-1 / JCM 10045 / NBRC 100440) (Methanococcus jannaschii).